The chain runs to 197 residues: Endothelial cell-specific chemotaxis regulator (197 aa).

A signal peptide spans 1–23 (MGSVRETQLRWAILGFLLLQAAS). Residues 24–113 (ETPSQFSTEA…PSPTSETVLT (90 aa)) are Extracellular-facing. The segment at 40–107 (TVADHLPSSP…ADSTVPPSPT (68 aa)) is disordered. A compositionally biased stretch (polar residues) spans 50 to 63 (GPTWSQSQKHTSGL). Low complexity predominate over residues 64 to 82 (SADVPSSGRSSDSMSGDTS). Positions 83 to 107 (HNVTSTSPNMSFRTTADSTVPPSPT) are enriched in polar residues. The chain crosses the membrane as a helical span at residues 114-134 (VAAFGVISFIAILVVVVIVLV). Topologically, residues 135–197 (SVVSLRFKCR…KGCPSAEKVL (63 aa)) are cytoplasmic. Disordered regions lie at residues 146 to 172 (NKES…GEKE) and 178 to 197 (SMKN…EKVL). 2 stretches are compositionally biased toward polar residues: residues 155–168 (PGSS…STAN) and 178–189 (SMKNINMNNSKG). Serine 187 is modified (phosphoserine).

It belongs to the ECSCR family. Interacts with FLNA. Interacts with the 20S proteasome subunit PSMA7. May be heavily O-glycosylated.

The protein resides in the cell membrane. It localises to the cytoplasm. Functionally, regulates endothelial chemotaxis and tube formation. Has a role in angiogenesis and apoptosis via modulation of the actin cytoskeleton and facilitation of proteasomal degradation of the apoptosis inhibitors BIRC3/IAP1 and BIRC2/IAP2. The polypeptide is Endothelial cell-specific chemotaxis regulator (ECSCR) (Bos taurus (Bovine)).